The primary structure comprises 268 residues: TATA-box-binding protein (268 aa).

The span at M1–S24 shows a compositional bias: polar residues. Residues M1–A86 form a disordered region. Positions N50–A86 are enriched in low complexity. Tandem repeats lie at residues L95 to I171 and I185 to L262.

This sequence belongs to the TBP family. In terms of assembly, belongs to the TFIID complex together with the TBP-associated factors (TAFs). Binds DNA as monomer.

It localises to the nucleus. Functionally, general transcription factor that functions at the core of the DNA-binding multiprotein factor TFIID. Binding of TFIID to the TATA box is the initial transcriptional step of the pre-initiation complex (PIC), playing a role in the activation of eukaryotic genes transcribed by RNA polymerase II. This is TATA-box-binding protein (tbpA) from Emericella nidulans (strain FGSC A4 / ATCC 38163 / CBS 112.46 / NRRL 194 / M139) (Aspergillus nidulans).